Consider the following 153-residue polypeptide: Large ribosomal subunit protein bL9 (153 aa).

This sequence belongs to the bacterial ribosomal protein bL9 family.

Its function is as follows. Binds to the 23S rRNA. The sequence is that of Large ribosomal subunit protein bL9 from Synechococcus sp. (strain JA-3-3Ab) (Cyanobacteria bacterium Yellowstone A-Prime).